Here is a 266-residue protein sequence, read N- to C-terminus: Thymidylate synthase (266 aa).

Position 24 (Arg24) interacts with dUMP. His54 lines the (6R)-5,10-methylene-5,6,7,8-tetrahydrofolate pocket. 129 to 130 contributes to the dUMP binding site; the sequence is RR. Cys149 serves as the catalytic Nucleophile. Residues 169-172, Asn180, and 210-212 each bind dUMP; these read RSAD and HIY. Residue Asp172 coordinates (6R)-5,10-methylene-5,6,7,8-tetrahydrofolate. Ala265 provides a ligand contact to (6R)-5,10-methylene-5,6,7,8-tetrahydrofolate.

This sequence belongs to the thymidylate synthase family. Bacterial-type ThyA subfamily. Homodimer.

It localises to the cytoplasm. The enzyme catalyses dUMP + (6R)-5,10-methylene-5,6,7,8-tetrahydrofolate = 7,8-dihydrofolate + dTMP. The protein operates within pyrimidine metabolism; dTTP biosynthesis. Functionally, catalyzes the reductive methylation of 2'-deoxyuridine-5'-monophosphate (dUMP) to 2'-deoxythymidine-5'-monophosphate (dTMP) while utilizing 5,10-methylenetetrahydrofolate (mTHF) as the methyl donor and reductant in the reaction, yielding dihydrofolate (DHF) as a by-product. This enzymatic reaction provides an intracellular de novo source of dTMP, an essential precursor for DNA biosynthesis. This chain is Thymidylate synthase, found in Mycolicibacterium paratuberculosis (strain ATCC BAA-968 / K-10) (Mycobacterium paratuberculosis).